Consider the following 358-residue polypeptide: Methylthioribose-1-phosphate isomerase (358 aa).

Met-1 is modified (N-acetylmethionine). The active-site Proton donor is the Asp-248.

It belongs to the eIF-2B alpha/beta/delta subunits family. MtnA subfamily.

It is found in the cytoplasm. It localises to the nucleus. It catalyses the reaction 5-(methylsulfanyl)-alpha-D-ribose 1-phosphate = 5-(methylsulfanyl)-D-ribulose 1-phosphate. It participates in amino-acid biosynthesis; L-methionine biosynthesis via salvage pathway; L-methionine from S-methyl-5-thio-alpha-D-ribose 1-phosphate: step 1/6. Catalyzes the interconversion of methylthioribose-1-phosphate (MTR-1-P) into methylthioribulose-1-phosphate (MTRu-1-P). The protein is Methylthioribose-1-phosphate isomerase of Bos taurus (Bovine).